A 598-amino-acid chain; its full sequence is MFS transporter L2 (598 aa).

Transmembrane regions (helical) follow at residues 83–103 (IAAF…ATSI), 122–142 (FWAG…LGSF), and 150–170 (SLIY…AVAN). Asn171 carries N-linked (GlcNAc...) asparagine glycosylation. The next 5 membrane-spanning stretches (helical) occupy residues 183–203 (GVGG…TVPL), 212–232 (FFGM…GAFA), 239–259 (WVFW…TVFL), 277–297 (WIGM…ITWG), and 309–329 (LVPL…QEKF). An N-linked (GlcNAc...) asparagine glycan is attached at Asn342. Helical transmembrane passes span 346–366 (ALLY…LYFM), 383–403 (VALF…GIAI), 411–431 (WANW…ILLK), 439–459 (WIFL…AMAL), 476–496 (MFSF…GVVF), and 550–570 (YIWI…LFID).

It belongs to the major facilitator superfamily.

The protein resides in the membrane. In terms of biological role, MFS transporter; part of the gene cluster that mediates the biosynthesis of squalestatin S1 (SQS1, also known as zaragozic acid A), a lead compound for the treatment of hyper-cholesterolemia by targeting squalene synthase (SS). In Phoma sp. (strain ATCC 20986 / MF5453), this protein is MFS transporter L2.